The chain runs to 61 residues: Small ribosomal subunit protein uS14 (61 aa).

Residues Cys-24, Cys-27, Cys-40, and Cys-43 each contribute to the Zn(2+) site.

Belongs to the universal ribosomal protein uS14 family. Zinc-binding uS14 subfamily. Part of the 30S ribosomal subunit. Contacts proteins S3 and S10. The cofactor is Zn(2+).

In terms of biological role, binds 16S rRNA, required for the assembly of 30S particles and may also be responsible for determining the conformation of the 16S rRNA at the A site. In Nautilia profundicola (strain ATCC BAA-1463 / DSM 18972 / AmH), this protein is Small ribosomal subunit protein uS14.